Consider the following 122-residue polypeptide: Large ribosomal subunit protein bL12 (122 aa).

The protein belongs to the bacterial ribosomal protein bL12 family. As to quaternary structure, homodimer. Part of the ribosomal stalk of the 50S ribosomal subunit. Forms a multimeric L10(L12)X complex, where L10 forms an elongated spine to which 2 to 4 L12 dimers bind in a sequential fashion. Binds GTP-bound translation factors.

Functionally, forms part of the ribosomal stalk which helps the ribosome interact with GTP-bound translation factors. Is thus essential for accurate translation. The protein is Large ribosomal subunit protein bL12 of Streptococcus sanguinis (strain SK36).